Consider the following 170-residue polypeptide: ATP synthase subunit b (170 aa).

Residues 22-41 form a helical membrane-spanning segment; the sequence is VLNWAVVVFGLYKFLPGFLG.

Belongs to the ATPase B chain family. As to quaternary structure, F-type ATPases have 2 components, F(1) - the catalytic core - and F(0) - the membrane proton channel. F(1) has five subunits: alpha(3), beta(3), gamma(1), delta(1), epsilon(1). F(0) has four main subunits: a(1), b(1), b'(1) and c(10-14). The alpha and beta chains form an alternating ring which encloses part of the gamma chain. F(1) is attached to F(0) by a central stalk formed by the gamma and epsilon chains, while a peripheral stalk is formed by the delta, b and b' chains.

Its subcellular location is the cellular thylakoid membrane. F(1)F(0) ATP synthase produces ATP from ADP in the presence of a proton or sodium gradient. F-type ATPases consist of two structural domains, F(1) containing the extramembraneous catalytic core and F(0) containing the membrane proton channel, linked together by a central stalk and a peripheral stalk. During catalysis, ATP synthesis in the catalytic domain of F(1) is coupled via a rotary mechanism of the central stalk subunits to proton translocation. In terms of biological role, component of the F(0) channel, it forms part of the peripheral stalk, linking F(1) to F(0). This chain is ATP synthase subunit b, found in Prochlorococcus marinus subsp. pastoris (strain CCMP1986 / NIES-2087 / MED4).